A 353-amino-acid polypeptide reads, in one-letter code: Quinolinate synthase (353 aa).

Iminosuccinate is bound by residues histidine 47 and serine 68. Position 113 (cysteine 113) interacts with [4Fe-4S] cluster. Iminosuccinate-binding positions include 139-141 (YAN) and serine 156. Cysteine 200 contacts [4Fe-4S] cluster. Residues 226–228 (HPE) and threonine 243 each bind iminosuccinate. Residue cysteine 297 coordinates [4Fe-4S] cluster.

It belongs to the quinolinate synthase family. Type 1 subfamily. [4Fe-4S] cluster is required as a cofactor.

It localises to the cytoplasm. It carries out the reaction iminosuccinate + dihydroxyacetone phosphate = quinolinate + phosphate + 2 H2O + H(+). Its pathway is cofactor biosynthesis; NAD(+) biosynthesis; quinolinate from iminoaspartate: step 1/1. In terms of biological role, catalyzes the condensation of iminoaspartate with dihydroxyacetone phosphate to form quinolinate. This chain is Quinolinate synthase, found in Yersinia pestis bv. Antiqua (strain Nepal516).